The chain runs to 396 residues: Serine/threonine-protein kinase 32A (396 aa).

Gly-2 is lipidated: N-myristoyl glycine. The Protein kinase domain occupies 23–281 (FEILRAIGKG…LSDVQNFPYM (259 aa)). Residues 29-37 (IGKGSFGKV) and Lys-52 contribute to the ATP site. Asp-146 acts as the Proton acceptor in catalysis. The tract at residues 373 to 396 (KRQPNLALEQTKDPQGEDGQNNNL) is disordered.

The protein belongs to the protein kinase superfamily. Ser/Thr protein kinase family. Mg(2+) is required as a cofactor.

It is found in the cell membrane. It catalyses the reaction L-seryl-[protein] + ATP = O-phospho-L-seryl-[protein] + ADP + H(+). The catalysed reaction is L-threonyl-[protein] + ATP = O-phospho-L-threonyl-[protein] + ADP + H(+). The protein is Serine/threonine-protein kinase 32A (STK32A) of Homo sapiens (Human).